Here is a 401-residue protein sequence, read N- to C-terminus: Elongation factor Tu 1 (401 aa).

Residues 10–209 (KPHVNVGTIG…AVDEYIPTPV (200 aa)) enclose the tr-type G domain. A G1 region spans residues 19-26 (GHVDHGKT). Residue 19–26 (GHVDHGKT) coordinates GTP. Thr-26 is a binding site for Mg(2+). The segment at 60-64 (GITIA) is G2. The tract at residues 81–84 (DCPG) is G3. GTP-binding positions include 81–85 (DCPGH) and 136–139 (NKVD). The segment at 136–139 (NKVD) is G4. The interval 174 to 176 (SAL) is G5.

Belongs to the TRAFAC class translation factor GTPase superfamily. Classic translation factor GTPase family. EF-Tu/EF-1A subfamily. Monomer.

The protein resides in the cytoplasm. The enzyme catalyses GTP + H2O = GDP + phosphate + H(+). Functionally, GTP hydrolase that promotes the GTP-dependent binding of aminoacyl-tRNA to the A-site of ribosomes during protein biosynthesis. In Roseiflexus sp. (strain RS-1), this protein is Elongation factor Tu 1.